Here is a 293-residue protein sequence, read N- to C-terminus: Ribosomal protein L11 methyltransferase (293 aa).

Positions 145, 166, 188, and 230 each coordinate S-adenosyl-L-methionine.

This sequence belongs to the methyltransferase superfamily. PrmA family.

The protein resides in the cytoplasm. It carries out the reaction L-lysyl-[protein] + 3 S-adenosyl-L-methionine = N(6),N(6),N(6)-trimethyl-L-lysyl-[protein] + 3 S-adenosyl-L-homocysteine + 3 H(+). In terms of biological role, methylates ribosomal protein L11. This Shigella sonnei (strain Ss046) protein is Ribosomal protein L11 methyltransferase.